Here is a 303-residue protein sequence, read N- to C-terminus: Porphobilinogen deaminase (303 aa).

An S-(dipyrrolylmethanemethyl)cysteine modification is found at Cys240.

This sequence belongs to the HMBS family. Monomer. Dipyrromethane serves as cofactor.

It carries out the reaction 4 porphobilinogen + H2O = hydroxymethylbilane + 4 NH4(+). It participates in porphyrin-containing compound metabolism; protoporphyrin-IX biosynthesis; coproporphyrinogen-III from 5-aminolevulinate: step 2/4. Its function is as follows. Tetrapolymerization of the monopyrrole PBG into the hydroxymethylbilane pre-uroporphyrinogen in several discrete steps. The polypeptide is Porphobilinogen deaminase (Stenotrophomonas maltophilia (strain K279a)).